We begin with the raw amino-acid sequence, 283 residues long: Transcription factor bHLH104 (283 aa).

The disordered stretch occupies residues 96 to 134 (VEINSGSSGGAVKEEQEHLDDDCSRKRARTGSCSRGGGT). A compositionally biased stretch (basic and acidic residues) spans 107-120 (VKEEQEHLDDDCSR). The bHLH domain maps to 130–181 (RGGGTKACRERLRREKLNERFMDLSSVLEPGRTPKTDKPAILDDAIRILNQL).

As to quaternary structure, homodimer. Interacts with BTS and BHLH47/PYE.

Its subcellular location is the nucleus. The polypeptide is Transcription factor bHLH104 (BHLH104) (Arabidopsis thaliana (Mouse-ear cress)).